We begin with the raw amino-acid sequence, 163 residues long: Campylobacter invasion antigen D (163 aa).

Residues 135-145 (KKDDLENRLNL) carry the MKD motif.

Interacts with the host cell protein IQGAP1, thus displacing RACGAP1 from the IQGAP1 complex.

The protein localises to the secreted. The protein resides in the host cytoplasm. It is found in the host cytosol. Functionally, effector protein required for the development of acute disease and colon inflammatory lesions. Required for maximal host cell invasion and maximal secretion of the inflammatory chemokine interleukin-8 (IL-8) from host cells. Acts by activating the host MAP kinase signaling pathways ERK-1/2 and p38 to promote both cellular invasion and the release of IL-8. CiaD mediated activation of ERK-1/2 leads to the phosphorylation of host cortactin (CTTN) on serine residues and association of cortactin with N-WASP, promoting actin cytoskeleton rearrangement, membrane ruffling and host cell invasion. In addition, maximal host cell invasion requires interaction with the host cell protein IQGAP1, a Ras GTPase-activating-like protein. Binding to IQGAP1 facilitates the activation of the Rho GTPases RAC1 and CDC42, further promoting actin reorganization and bacterial uptake. CiaD promotes RAC1 activation by excluding RACGAP1 from the IQGAP1 complex, preventing the deactivation of RAC1. CiaD probably activates ERK signaling upstream or independently of IQGAP1. The chain is Campylobacter invasion antigen D from Campylobacter jejuni subsp. jejuni serotype O:2 (strain ATCC 700819 / NCTC 11168).